A 366-amino-acid polypeptide reads, in one-letter code: Photosynthetic reaction center cytochrome c subunit (366 aa).

The first 22 residues, 1-22 (MALAVRISTLTVAVTAAALLAG), serve as a signal peptide directing secretion. Cys-23 carries the N-palmitoyl cysteine lipid modification. The S-diacylglycerol cysteine moiety is linked to residue Cys-23. Positions 94, 107, 110, 111, 129, 143, 151, 154, 155, 238, 249, 252, 253, 309, 312, and 313 each coordinate heme.

Component of the photosynthetic reaction center composed of protein subunits L (PufL), M (PufM), H (PuhA) and cytochrome C (PufC). The reaction center interacts with light-harvesting antenna complex LH1. Post-translationally, binds 4 heme groups per subunit.

The protein localises to the cellular chromatophore membrane. Functionally, the reaction center of purple bacteria contains a tightly bound cytochrome molecule which re-reduces the photo oxidized primary electron donor. This is Photosynthetic reaction center cytochrome c subunit (pufC) from Rubrivivax gelatinosus (strain NBRC 100245 / IL144).